The sequence spans 867 residues: Protein melted homolog (867 aa).

Positions 480 to 505 (MPSSSRTNVHLSQAASSSRGHSLPQT) are disordered. Positions 753-860 (EKVLEGQLKE…WLHCLQIAMA (108 aa)) constitute a PH domain.

Belongs to the MELT/VEPH family.

The protein resides in the cell membrane. This is Protein melted homolog from Caenorhabditis briggsae.